The following is a 370-amino-acid chain: Ubiquinone biosynthesis O-methyltransferase, mitochondrial (370 aa).

The transit peptide at 1–86 directs the protein to the mitochondrion; sequence MWGGSKLSSS…SYRLPWTRPY (86 aa). Arginine 125 contacts S-adenosyl-L-methionine. Lysine 144 and lysine 150 each carry N6-acetyllysine. 2 residues coordinate S-adenosyl-L-methionine: glycine 155 and aspartate 176. Position 197 is an N6-acetyllysine (lysine 197). Serine 223 provides a ligand contact to S-adenosyl-L-methionine. Glutamate 224, glutamate 227, and histidine 228 together coordinate Mg(2+).

This sequence belongs to the class I-like SAM-binding methyltransferase superfamily. UbiG/COQ3 family. Component of a multi-subunit COQ enzyme complex, composed of at least COQ3, COQ4, COQ5, COQ6, COQ7 and COQ9. Requires Mg(2+) as cofactor.

The protein localises to the mitochondrion inner membrane. It carries out the reaction 3,4-dihydroxy-5-(all-trans-decaprenyl)benzoate + S-adenosyl-L-methionine = 4-hydroxy-3-methoxy-5-(all-trans-decaprenyl)benzoate + S-adenosyl-L-homocysteine + H(+). The enzyme catalyses a 3-demethylubiquinone + S-adenosyl-L-methionine = a ubiquinone + S-adenosyl-L-homocysteine. It catalyses the reaction 3-demethylubiquinol-10 + S-adenosyl-L-methionine = ubiquinol-10 + S-adenosyl-L-homocysteine + H(+). The protein operates within cofactor biosynthesis; ubiquinone biosynthesis. Its function is as follows. O-methyltransferase required for two non-consecutive steps during ubiquinone biosynthesis. Catalyzes the 2 O-methylation of 3,4-dihydroxy-5-(all-trans-decaprenyl)benzoic acid into 4-hydroxy-3-methoxy-5-(all-trans-decaprenyl)benzoic acid. Also catalyzes the last step of ubiquinone biosynthesis by mediating methylation of 3-demethylubiquinone into ubiquinone. Also able to mediate the methylation of 3-demethylubiquinol-10 into ubiquinol-10. The polypeptide is Ubiquinone biosynthesis O-methyltransferase, mitochondrial (Bos taurus (Bovine)).